Here is a 350-residue protein sequence, read N- to C-terminus: 2-oxoisovalerate dehydrogenase subunit beta (350 aa).

Heterodimer of an alpha and a beta chain. Thiamine diphosphate serves as cofactor.

The catalysed reaction is N(6)-[(R)-lipoyl]-L-lysyl-[protein] + 3-methyl-2-oxobutanoate + H(+) = N(6)-[(R)-S(8)-2-methylpropanoyldihydrolipoyl]-L-lysyl-[protein] + CO2. In terms of biological role, the branched-chain alpha-keto dehydrogenase complex catalyzes the overall conversion of alpha-keto acids to acyl-CoA and CO(2). It contains multiple copies of three enzymatic components: branched-chain alpha-keto acid decarboxylase (E1), lipoamide acyltransferase (E2) and lipoamide dehydrogenase (E3). This Pseudomonas aeruginosa (strain ATCC 15692 / DSM 22644 / CIP 104116 / JCM 14847 / LMG 12228 / 1C / PRS 101 / PAO1) protein is 2-oxoisovalerate dehydrogenase subunit beta (bkdA2).